Consider the following 195-residue polypeptide: Probable GTP-binding protein EngB (195 aa).

Residues 24–195 (GLKEVALAGR…MIFNAIEKYL (172 aa)) enclose the EngB-type G domain. Residues 32–39 (GRSNVGKS), 59–63 (GKTQT), 77–80 (DVPG), 144–147 (TKED), and 176–178 (YTA) each bind GTP. The Mg(2+) site is built by Ser-39 and Thr-61.

It belongs to the TRAFAC class TrmE-Era-EngA-EngB-Septin-like GTPase superfamily. EngB GTPase family. The cofactor is Mg(2+).

In terms of biological role, necessary for normal cell division and for the maintenance of normal septation. The chain is Probable GTP-binding protein EngB from Macrococcus caseolyticus (strain JCSC5402) (Macrococcoides caseolyticum).